A 555-amino-acid polypeptide reads, in one-letter code: Serine/threonine-protein kinase AGC1-7 (555 aa).

Residues 1–126 are disordered; sequence MLTKPGKKLD…PSKPHTGGDI (126 aa). Composition is skewed to basic and acidic residues over residues 7 to 16 and 35 to 54; these read KKLDSSESTH and PRKEMQQKPLFDPKKMDNLI. Over residues 84–118 the composition is skewed to low complexity; sequence SQSNLNTKPNNNNSNNNSNMSSRSNSIESTSSNPS. The Protein kinase domain maps to 146–480; the sequence is FRLLKRLGYG…ATEIKQHPFF (335 aa). ATP is bound by residues 152-160 and K175; that span reads LGYGDIGSV. The active-site Proton acceptor is D271. The 75-residue stretch at 481-555 folds into the AGC-kinase C-terminal domain; it reads EGVNWALIRS…DPDYIDFEYF (75 aa). Residues 514-547 form a disordered region; the sequence is AAVDGGGKKNNNGAGGGCSTGGGDNKPNGDCNDP. Gly residues predominate over residues 526–537; sequence GAGGGCSTGGGD.

The protein belongs to the protein kinase superfamily. AGC Ser/Thr protein kinase family. As to quaternary structure, interacts with PDPK1/PDK1. In terms of processing, autophosphorylated and phosphorylated by PDPK1/PDK1. In terms of tissue distribution, specifically expressed in pollen grains.

The protein resides in the cytoplasm. The catalysed reaction is L-seryl-[protein] + ATP = O-phospho-L-seryl-[protein] + ADP + H(+). It catalyses the reaction L-threonyl-[protein] + ATP = O-phospho-L-threonyl-[protein] + ADP + H(+). Its activity is regulated as follows. Activated by PDPK1/PDK1. In terms of biological role, functions redudantly with AGC1-5 as signaling component in the pollen tube. Required for polarized growth of pollen tubes. In Arabidopsis thaliana (Mouse-ear cress), this protein is Serine/threonine-protein kinase AGC1-7.